A 346-amino-acid chain; its full sequence is N-acetyl-gamma-glutamyl-phosphate reductase (346 aa).

C151 is an active-site residue.

This sequence belongs to the NAGSA dehydrogenase family. Type 1 subfamily.

It localises to the cytoplasm. The catalysed reaction is N-acetyl-L-glutamate 5-semialdehyde + phosphate + NADP(+) = N-acetyl-L-glutamyl 5-phosphate + NADPH + H(+). It functions in the pathway amino-acid biosynthesis; L-arginine biosynthesis; N(2)-acetyl-L-ornithine from L-glutamate: step 3/4. In terms of biological role, catalyzes the NADPH-dependent reduction of N-acetyl-5-glutamyl phosphate to yield N-acetyl-L-glutamate 5-semialdehyde. The sequence is that of N-acetyl-gamma-glutamyl-phosphate reductase from Ehrlichia chaffeensis (strain ATCC CRL-10679 / Arkansas).